Reading from the N-terminus, the 515-residue chain is Cyclic AMP receptor-like protein G (515 aa).

Residues 1-16 (MSSIIFIPNDADNINS) are Extracellular-facing. The helical transmembrane segment at 17 to 37 (IMVTISSSLSLVGCLFILSIY) threads the bilayer. The Cytoplasmic portion of the chain corresponds to 38–50 (IYYKELREFQLKL). A helical membrane pass occupies residues 51 to 71 (IFIMTINDFIISIIFLIATHI). Residues 72–92 (QTKYFDAITNVFPFFCNFPDS) lie on the Extracellular side of the membrane. The chain crosses the membrane as a helical span at residues 93–113 (LLHYFFLSSFFWEVCIAHTLI). Over 114-129 (QVIKYNNDKVEDNLKK) the chain is Cytoplasmic. Residues 130–150 (YFIFSNGLSALIMVSLFFIRS) traverse the membrane as a helical segment. Residues 151–164 (YSKIDCHHDSIFPH) lie on the Extracellular side of the membrane. The chain crosses the membrane as a helical span at residues 165–185 (LLFFIPLLLTWIYNIIVCALL). Residues 186-276 (TKTFKEQAMN…IRKTPNIIWT (91 aa)) are Cytoplasmic-facing. Residues 277 to 297 (SIFFLFSFGFIWSWSILVIIL) traverse the membrane as a helical segment. Topologically, residues 298–306 (KYLSLDVKY) are extracellular. Residues 307–327 (ILMISYFFIPLHGCMNAVCFG) form a helical membrane-spanning segment. At 328-515 (VNDRLRMNLK…FCTIDEDETK (188 aa)) the chain is on the cytoplasmic side. A compositionally biased stretch (low complexity) spans 362–375 (NGNNKNNKNNNGAN). Disordered regions lie at residues 362-409 (NGNN…YYQI) and 469-515 (NNNN…DETK). Residues 385–396 (SPDDDDDEDDDN) show a composition bias toward acidic residues. 2 stretches are compositionally biased toward low complexity: residues 397 to 407 (NNNNYSDGNYY) and 469 to 504 (NNNN…NNNN).

It belongs to the G-protein coupled receptor 5 family.

It is found in the membrane. Functionally, receptor for cAMP. The protein is Cyclic AMP receptor-like protein G (crlG) of Dictyostelium discoideum (Social amoeba).